The chain runs to 237 residues: Ribonuclease PH (237 aa).

Phosphate is bound by residues Arg86 and 124–126 (GTR).

It belongs to the RNase PH family. Homohexameric ring arranged as a trimer of dimers.

The catalysed reaction is tRNA(n+1) + phosphate = tRNA(n) + a ribonucleoside 5'-diphosphate. Phosphorolytic 3'-5' exoribonuclease that plays an important role in tRNA 3'-end maturation. Removes nucleotide residues following the 3'-CCA terminus of tRNAs; can also add nucleotides to the ends of RNA molecules by using nucleoside diphosphates as substrates, but this may not be physiologically important. Probably plays a role in initiation of 16S rRNA degradation (leading to ribosome degradation) during starvation. The sequence is that of Ribonuclease PH from Nitrobacter hamburgensis (strain DSM 10229 / NCIMB 13809 / X14).